The sequence spans 390 residues: E3 ubiquitin-protein ligase At4g11680 (390 aa).

A compositionally biased stretch (low complexity) spans 1-19 (MSSSSSTTTNTTTESDSSS). The disordered stretch occupies residues 1–39 (MSSSSSTTTNTTTESDSSSLPTHIGRSNSDGIIDTTPFL). 5 helical membrane-spanning segments follow: residues 109–129 (VVFL…AVLI), 142–162 (VWVV…CVEY), 212–232 (MFSF…GQTL), 244–264 (IIFL…ACVI), and 265–285 (GLAV…VADQ). Residues 338-379 (CCICLCEYEDGVELRELPCNHHFHCTCIDKWLHINSRCPLCK) form an RING-type; atypical zinc finger.

Its subcellular location is the membrane. It catalyses the reaction S-ubiquitinyl-[E2 ubiquitin-conjugating enzyme]-L-cysteine + [acceptor protein]-L-lysine = [E2 ubiquitin-conjugating enzyme]-L-cysteine + N(6)-ubiquitinyl-[acceptor protein]-L-lysine.. Its pathway is protein modification; protein ubiquitination. Its function is as follows. Mediates E2-dependent protein ubiquitination in vitro. This Arabidopsis thaliana (Mouse-ear cress) protein is E3 ubiquitin-protein ligase At4g11680.